A 207-amino-acid polypeptide reads, in one-letter code: Hepatic lectin (207 aa).

The residue at position 1 (M1) is an N-acetylmethionine. At 1–23 (MDEERLSDNVRLYKGGSIRQGLR) the chain is on the cytoplasmic side. Residues 24–48 (SFAAVYVLLALSFLLLTLLSSVSLA) form a helical; Signal-anchor for type II membrane protein membrane-spanning segment. The Extracellular segment spans residues 49 to 207 (RIAALSSKLS…YYVCEKPLPK (159 aa)). Residue N67 is glycosylated (N-linked (GlcNAc...) asparagine). The region spanning 77-203 (PCGAQSRQWE…TYECYYVCEK (127 aa)) is the C-type lectin domain. 3 disulfide bridges follow: C78–C92, C109–C201, and C179–C193.

Post-translationally, some or all of the cysteines are involved in disulfide bonds.

It localises to the membrane. In terms of biological role, hepatic lectin is a membrane receptor protein that recognizes and binds exposed N-acetylglucosamine moieties of plasma glycoproteins, thus mediating their clearance (from the circulation) and endocytosis. This is Hepatic lectin from Gallus gallus (Chicken).